A 159-amino-acid chain; its full sequence is MKAIYPGSFDPITYGHLDIIKRATKIFSEVYVVVMENKRKNYTFTLEERIKMIEECTENIKNVKIDYFRGLLIDYLKMHKIDVIIRGLRAVTDFEYELQMAMANKEMCPNVDTVFLMTDKKYSFISSSLVKEVAYFGGDISRWVPKSVERKLRKKVNGV.

Residue Ser-8 coordinates substrate. Residues 8–9 (SF) and His-16 contribute to the ATP site. Residues Lys-40, Leu-72, and Arg-86 each coordinate substrate. Residues 87-89 (GLR), Glu-97, and 122-128 (YSFISSS) contribute to the ATP site.

The protein belongs to the bacterial CoaD family. In terms of assembly, homohexamer. Requires Mg(2+) as cofactor.

The protein resides in the cytoplasm. The catalysed reaction is (R)-4'-phosphopantetheine + ATP + H(+) = 3'-dephospho-CoA + diphosphate. It participates in cofactor biosynthesis; coenzyme A biosynthesis; CoA from (R)-pantothenate: step 4/5. Its function is as follows. Reversibly transfers an adenylyl group from ATP to 4'-phosphopantetheine, yielding dephospho-CoA (dPCoA) and pyrophosphate. The protein is Phosphopantetheine adenylyltransferase of Thermosipho melanesiensis (strain DSM 12029 / CIP 104789 / BI429).